Consider the following 159-residue polypeptide: Probable minor fimbrial protein (159 aa).

Residues 1 to 6 (MKKMHG) constitute a propeptide, leader sequence. An N-methylphenylalanine modification is found at Phe-7. The helical transmembrane segment at 7–29 (FTLIELMIVVAIIGVLASIALMQ) threads the bilayer. 2 disulfides stabilise this stretch: Cys-56–Cys-71 and Cys-140–Cys-153.

The protein belongs to the N-Me-Phe pilin family. In terms of assembly, the pili are polar flexible filaments of about 5.4 nanometers diameter and 2.5 micrometers average length; they consist of only a single polypeptide chain arranged in a helical configuration of five subunits per turn in the assembled pilus.

It localises to the fimbrium. Its subcellular location is the membrane. The chain is Probable minor fimbrial protein (fimZ) from Dichelobacter nodosus (Bacteroides nodosus).